A 143-amino-acid chain; its full sequence is Fluoride-specific ion channel FluC (143 aa).

Transmembrane regions (helical) follow at residues 3 to 23 (AVVWWQSLLLVMLGGAFGSGL), 41 to 61 (WGTLAVNLIGSFVAGFLLIWL), 76 to 96 (IVGLIGGLTTFSSLMMECLVF), and 103 to 123 (LMVGLYLCITLLFGLLFVFLG). Residues Gly81 and Thr84 each contribute to the Na(+) site.

It belongs to the fluoride channel Fluc/FEX (TC 1.A.43) family.

The protein resides in the cell inner membrane. The catalysed reaction is fluoride(in) = fluoride(out). Its activity is regulated as follows. Na(+) is not transported, but it plays an essential structural role and its presence is essential for fluoride channel function. Its function is as follows. Fluoride-specific ion channel. Important for reducing fluoride concentration in the cell, thus reducing its toxicity. The sequence is that of Fluoride-specific ion channel FluC from Xylella fastidiosa (strain 9a5c).